A 212-amino-acid chain; its full sequence is Thymidylate kinase (212 aa).

9–16 is an ATP binding site; sequence GIDGCGKT.

Belongs to the thymidylate kinase family.

The enzyme catalyses dTMP + ATP = dTDP + ADP. Phosphorylation of dTMP to form dTDP in both de novo and salvage pathways of dTTP synthesis. This Synechococcus sp. (strain CC9311) protein is Thymidylate kinase.